Reading from the N-terminus, the 93-residue chain is UPF0358 protein lin1058 (93 aa).

It belongs to the UPF0358 family.

The protein is UPF0358 protein lin1058 of Listeria innocua serovar 6a (strain ATCC BAA-680 / CLIP 11262).